The sequence spans 44 residues: Tachystatin-A1 (44 aa).

3 cysteine pairs are disulfide-bonded: Cys-4–Cys-24, Cys-11–Cys-29, and Cys-23–Cys-41.

As to expression, granular hemocytes, small secretory granules.

The protein resides in the secreted. In terms of biological role, exhibits stronger antimicrobial activity against the Gram-positive bacteria (S.aureus (IC(50) is 4.2 ug/ml)) and fungi (C.albicans (IC(50) is 3.0 ug/ml) and P.pastoris (IC(50) is 0.5 ug/ml)) than Gram-negative bacteria (E.coli (IC(50) is 25 ug/ml)). Binds to chitin (8.4 uM are required to obtain 50% of binding). Does not cause hemolysis on sheep erythrocytes. Has no blocking activity on the P-type calcium channel. In Tachypleus tridentatus (Japanese horseshoe crab), this protein is Tachystatin-A1.